Consider the following 238-residue polypeptide: Ribonuclease PH (238 aa).

Phosphate-binding positions include Arg-86 and 124–126; that span reads GTR.

The protein belongs to the RNase PH family. As to quaternary structure, homohexameric ring arranged as a trimer of dimers.

It catalyses the reaction tRNA(n+1) + phosphate = tRNA(n) + a ribonucleoside 5'-diphosphate. Phosphorolytic 3'-5' exoribonuclease that plays an important role in tRNA 3'-end maturation. Removes nucleotide residues following the 3'-CCA terminus of tRNAs; can also add nucleotides to the ends of RNA molecules by using nucleoside diphosphates as substrates, but this may not be physiologically important. Probably plays a role in initiation of 16S rRNA degradation (leading to ribosome degradation) during starvation. The sequence is that of Ribonuclease PH from Vibrio vulnificus (strain CMCP6).